Here is a 218-residue protein sequence, read N- to C-terminus: Small ribosomal subunit protein uS3 (218 aa).

Residues 38 to 106 (VREYINKRLQ…RVHINIVEIK (69 aa)) enclose the KH type-2 domain.

It belongs to the universal ribosomal protein uS3 family. In terms of assembly, part of the 30S ribosomal subunit. Forms a tight complex with proteins S10 and S14.

Binds the lower part of the 30S subunit head. Binds mRNA in the 70S ribosome, positioning it for translation. The polypeptide is Small ribosomal subunit protein uS3 (Geobacillus thermodenitrificans (strain NG80-2)).